A 682-amino-acid polypeptide reads, in one-letter code: Inactive protein-arginine deiminase type-6 (682 aa).

Phosphoserine occurs at positions 2 and 434.

This sequence belongs to the protein arginine deiminase family. As to quaternary structure, homodimers. Associates with alpha-tubulin. In terms of processing, phosphorylation at Ser-2, possibly by RSK-type kinases, and Ser-434 creates binding sites for 14-3-3 proteins. Expressed at very high levels in oocytes. Weakly expressed in testis. Expressed in primordial, primary, secondary and Graafian follicles, and in immature oocytes, mature eggs and blastocyst (at protein level).

It is found in the cytoplasm. It localises to the nucleus. Its subcellular location is the cytoplasmic vesicle. The protein resides in the secretory vesicle. The protein localises to the cortical granule. In terms of biological role, structural constituent of cytoplasmic lattices, which plays a key role in early embryonic development. Cytoplasmic lattices consist in fibrous structures found in the cytoplasm of oocytes and preimplantation embryos. They are required to store maternal proteins critical for embryonic development, such as ribosomal proteins and proteins that control epigenetic reprogramming of the preimplantation embryo, and prevent their degradation or activation. In contrast to other members of the family, does not show protein-arginine deiminase activity due to its inability to bind Ca(2+). This chain is Inactive protein-arginine deiminase type-6, found in Mus musculus (Mouse).